The sequence spans 499 residues: Ammonium transporter MEP2 (499 aa).

At 1–31 the chain is on the extracellular side; the sequence is MSYNFTGTPTGEGTGGNSLTTDLNTQFDLAN. An N-linked (GlcNAc...) asparagine glycan is attached at N4. The helical transmembrane segment at 32–52 threads the bilayer; the sequence is MGWIGVASAGVWIMVPGIGLL. The Cytoplasmic segment spans residues 53–62; sequence YSGLSRKKHA. Residues 63-83 traverse the membrane as a helical segment; the sequence is LSLLWASMMASAVCIFQWFFW. Topologically, residues 84–122 are extracellular; that stretch reads GYSLAFSHNTRGNGFIGTLEFFGFRNVLGAPSSVSSLPD. The chain crosses the membrane as a helical span at residues 123–143; sequence ILFAVYQGMFAAVTGALMLGG. Over 144–152 the chain is Cytoplasmic; that stretch reads ACERARLFP. The chain crosses the membrane as a helical span at residues 153–173; it reads MMVFLFLWMTIVYCPIACWVW. The Extracellular segment spans residues 174 to 187; that stretch reads NAEGWLVKLGSLDY. The helical transmembrane segment at 188-208 threads the bilayer; it reads AGGLCVHLTSGHGGLVYALIL. Residues 209–230 are Cytoplasmic-facing; it reads GKRNDPVTRKGMPKYKPHSVTS. Residues 231–251 traverse the membrane as a helical segment; the sequence is VVLGTVFLWFGWMFFNGGSAG. At 252-257 the chain is on the extracellular side; the sequence is NATIRA. Residues 258–278 traverse the membrane as a helical segment; that stretch reads WYSIMSTNLAAACGGLTWMVI. The Cytoplasmic segment spans residues 279–289; that stretch reads DYFRCGRKWTT. Residues 290–312 traverse the membrane as a helical segment; it reads VGLCSGIIAGLVGITPAAGFVPI. Topologically, residues 313–315 are extracellular; that stretch reads WSA. A helical transmembrane segment spans residues 316–338; that stretch reads VVIGVVTGAGCNLAVDLKSLLRI. At 339-346 the chain is on the cytoplasmic side; that stretch reads DDGLDCYS. A helical membrane pass occupies residues 347 to 367; it reads IHGVGGCIGSVLTGIFAADYV. At 368 to 393 the chain is on the extracellular side; that stretch reads NATAGSYISPIDGGWINHHYKQVGYQ. A helical membrane pass occupies residues 394–414; sequence LAGICAALAWTVTVTSILLLT. The Cytoplasmic segment spans residues 415-499; the sequence is MNAIPFLKLR…SSTKNTDHIV (85 aa). An enhancer domain region spans residues 428 to 441; the sequence is DEEELGTDAAQIGE. The linker domain stretch occupies residues 442 to 449; that stretch reads FTYEESTA. Positions 450-485 are autoinhibitory domain; the sequence is YIPEPIRSKTSAQMPPPHENIDDKIVGNTDAEKNST. The tract at residues 455–499 is disordered; it reads IRSKTSAQMPPPHENIDDKIVGNTDAEKNSTPSDASSTKNTDHIV. S457 is modified (phosphoserine). A compositionally biased stretch (basic and acidic residues) spans 468 to 482; sequence ENIDDKIVGNTDAEK. A compositionally biased stretch (polar residues) spans 483–493; it reads NSTPSDASSTK.

This sequence belongs to the ammonia transporter channel (TC 1.A.11.2) family. In terms of processing, phosphorylated at Ser-457 by the TORC1 effector kinase NPR1 under nitrogen-limiting conditions which causes a conformational change in the C-terminal region (CTR) to form an open active conformation. Supplementation of nitrogen source leads to inactivation and instant Ser-457 dephosphorylation via plasma membrane PSR1 and PSR2 redundant phosphatases. The residue Asn-4 of the protein's N-terminal tail is the only site that is glycosylated.

The protein resides in the cell membrane. Transporter for ammonium (both charged and uncharged NH3 and NH4) to use as a nitrogen source. The affinity of MEP2 is about twenty times higher than that of MEP1. MEP3 has the lowest affinity. Under ammonium limitation acts as an ammonium sensor, generating a signal that leads to pseudohyphal (filamentous) growth. The chain is Ammonium transporter MEP2 from Saccharomyces cerevisiae (strain ATCC 204508 / S288c) (Baker's yeast).